Consider the following 300-residue polypeptide: UDP-3-O-acyl-N-acetylglucosamine deacetylase (300 aa).

Residues His76, His235, and Asp239 each contribute to the Zn(2+) site. His262 (proton donor) is an active-site residue.

Belongs to the LpxC family. It depends on Zn(2+) as a cofactor.

The catalysed reaction is a UDP-3-O-[(3R)-3-hydroxyacyl]-N-acetyl-alpha-D-glucosamine + H2O = a UDP-3-O-[(3R)-3-hydroxyacyl]-alpha-D-glucosamine + acetate. It functions in the pathway glycolipid biosynthesis; lipid IV(A) biosynthesis; lipid IV(A) from (3R)-3-hydroxytetradecanoyl-[acyl-carrier-protein] and UDP-N-acetyl-alpha-D-glucosamine: step 2/6. Functionally, catalyzes the hydrolysis of UDP-3-O-myristoyl-N-acetylglucosamine to form UDP-3-O-myristoylglucosamine and acetate, the committed step in lipid A biosynthesis. This is UDP-3-O-acyl-N-acetylglucosamine deacetylase from Halorhodospira halophila (strain DSM 244 / SL1) (Ectothiorhodospira halophila (strain DSM 244 / SL1)).